The chain runs to 136 residues: MSVSLFTAFTVLSLCLHTSTSEFQLSTISAAPSFLPEAPSSFSASTPAMSPDTSPLFPTPGSSEMSPSPSESSIMPTIPSSLSPPNPDAVTPDPLLEVSPVGSPLPASSSVCLVSSQLSSLLLVLLMLLLAFCSFF.

The signal sequence occupies residues 1-21; the sequence is MSVSLFTAFTVLSLCLHTSTS. Residues 38-95 are disordered; sequence APSSFSASTPAMSPDTSPLFPTPGSSEMSPSPSESSIMPTIPSSLSPPNPDAVTPDPL. The segment covering 40–53 has biased composition (polar residues); sequence SSFSASTPAMSPDT. Residues 59–81 are compositionally biased toward low complexity; that stretch reads TPGSSEMSPSPSESSIMPTIPSS. The GPI-anchor amidated serine moiety is linked to residue Ser108. Residues 109-136 constitute a propeptide, removed in mature form; the sequence is SSVCLVSSQLSSLLLVLLMLLLAFCSFF.

Belongs to the classical AGP family. In terms of processing, O-glycosylated on the hydroxyproline residues.

The protein localises to the cell membrane. Its function is as follows. Proteoglycan that seems to be implicated in diverse developmental roles such as differentiation, cell-cell recognition, embryogenesis and programmed cell death. The chain is Classical arabinogalactan protein 26 (AGP26) from Arabidopsis thaliana (Mouse-ear cress).